The following is a 269-amino-acid chain: Regulatory protein RecX (269 aa).

It belongs to the RecX family.

It localises to the cytoplasm. In terms of biological role, modulates RecA activity. The polypeptide is Regulatory protein RecX (Geobacillus thermodenitrificans (strain NG80-2)).